The primary structure comprises 238 residues: Phosphoribosylaminoimidazole-succinocarboxamide synthase (238 aa).

Belongs to the SAICAR synthetase family.

It carries out the reaction 5-amino-1-(5-phospho-D-ribosyl)imidazole-4-carboxylate + L-aspartate + ATP = (2S)-2-[5-amino-1-(5-phospho-beta-D-ribosyl)imidazole-4-carboxamido]succinate + ADP + phosphate + 2 H(+). The protein operates within purine metabolism; IMP biosynthesis via de novo pathway; 5-amino-1-(5-phospho-D-ribosyl)imidazole-4-carboxamide from 5-amino-1-(5-phospho-D-ribosyl)imidazole-4-carboxylate: step 1/2. The polypeptide is Phosphoribosylaminoimidazole-succinocarboxamide synthase (Desulfitobacterium hafniense (strain Y51)).